The chain runs to 362 residues: 3-isopropylmalate dehydrogenase (362 aa).

77–88 (GPKWGTGAVRPE) serves as a coordination point for NAD(+). Substrate contacts are provided by R95, R105, R134, and D223. Mg(2+) contacts are provided by D223, D248, and D252. 287–298 (GSAPDLPANKVN) is an NAD(+) binding site.

This sequence belongs to the isocitrate and isopropylmalate dehydrogenases family. Homodimer. It depends on Mg(2+) as a cofactor. Mn(2+) is required as a cofactor.

It localises to the cytoplasm. The enzyme catalyses (2R,3S)-3-isopropylmalate + NAD(+) = 4-methyl-2-oxopentanoate + CO2 + NADH. The protein operates within amino-acid biosynthesis; L-leucine biosynthesis; L-leucine from 3-methyl-2-oxobutanoate: step 3/4. Catalyzes the oxidation of 3-carboxy-2-hydroxy-4-methylpentanoate (3-isopropylmalate) to 3-carboxy-4-methyl-2-oxopentanoate. The product decarboxylates to 4-methyl-2 oxopentanoate. The polypeptide is 3-isopropylmalate dehydrogenase (LEU2) (Kluyveromyces lactis (strain ATCC 8585 / CBS 2359 / DSM 70799 / NBRC 1267 / NRRL Y-1140 / WM37) (Yeast)).